The primary structure comprises 185 residues: Large ribosomal subunit protein uL22 (185 aa).

The protein belongs to the universal ribosomal protein uL22 family. Part of the 50S ribosomal subunit.

This protein binds specifically to 23S rRNA. It makes multiple contacts with different domains of the 23S rRNA in the assembled 50S subunit and ribosome. Functionally, the globular domain of the protein is located near the polypeptide exit tunnel on the outside of the subunit, while an extended beta-hairpin is found that lines the wall of the exit tunnel in the center of the 70S ribosome. This Caldivirga maquilingensis (strain ATCC 700844 / DSM 13496 / JCM 10307 / IC-167) protein is Large ribosomal subunit protein uL22.